The primary structure comprises 131 residues: MSWQAYVDEHLMCEIEGHHLASAAILGHDGTVWAQSADFPQFKPEEITGIMKDFDEPGHLAPTGMFVATAKYMVIQGEPGAVIRGKKGAGGITIKKTGQALVVGIYDEPMTPGQCNMVVERLGDYLLKQGL.

A disulfide bond links C13 and C115. Residues 81–97 (AVIRGKKGAGGITIKKT) carry the Involved in PIP2 interaction motif. Phosphothreonine is present on T111.

This sequence belongs to the profilin family. In terms of assembly, occurs in many kinds of cells as a complex with monomeric actin in a 1:1 ratio. Post-translationally, phosphorylated by MAP kinases.

The protein resides in the cytoplasm. Its subcellular location is the cytoskeleton. In terms of biological role, binds to actin and affects the structure of the cytoskeleton. At high concentrations, profilin prevents the polymerization of actin, whereas it enhances it at low concentrations. This is Profilin-4 from Phleum pratense (Common timothy).